Consider the following 2085-residue polypeptide: Protein MLP1 homolog (2085 aa).

Coiled-coil stretches lie at residues 44 to 367, 399 to 513, 568 to 630, 675 to 1205, 1232 to 1667, and 1744 to 1799; these read KIRE…SHDG, KATQ…HVLI, YELQ…RMKS, ANEA…KRTQ, LRRE…LQQE, and EIEA…AAKE. The segment at 365–398 is disordered; the sequence is HDGVPGSVPQTPRANGSLLARPSSPFGTPASLRG. Residues 934-953 are disordered; the sequence is AERLRPLPTPRAPAAAEQPS. The short motif at 1159-1166 is the Nuclear localization signal element; it reads ERRQRLEQ. A compositionally biased stretch (polar residues) spans 1482–1503; sequence LATATEKNTSLQQQLAASSTEQ. 2 disordered regions span residues 1482-1514 and 1567-1591; these read LATA…AAPS and SGGD…DEER. Over residues 1504–1514 the composition is skewed to low complexity; it reads PAAAPVSAAPS. The span at 1574–1584 shows a compositional bias: polar residues; it reads AETSVSAQPSA. Residues 1816–2085 form a disordered region; sequence KPPAPAQAPA…GGGGGGGGNQ (270 aa). Over residues 1817–1827 the composition is skewed to pro residues; the sequence is PPAPAQAPAPA. Low complexity-rich tracts occupy residues 1843 to 1858, 1910 to 1974, and 1982 to 1994; these read VAPA…QAPS, QAGQ…PVPA, and ARTA…AGPR. Gly residues predominate over residues 1995–2016; the sequence is GARGGRGGGFVGAGRGAGGAAG. A compositionally biased stretch (low complexity) spans 2028–2040; the sequence is GGATATAAAAAAA. Gly residues-rich tracts occupy residues 2041 to 2051 and 2076 to 2085; these read GGAGGSAGAGN and GGGGGGGGNQ.

In terms of assembly, the nuclear pore complex (NPC) constitutes the exclusive means of nucleocytoplasmic transport. NPCs allow the passive diffusion of ions and small molecules and the active, nuclear transport receptor-mediated bidirectional transport of macromolecules such as proteins, RNAs, ribonucleoparticles (RNPs), and ribosomal subunits across the nuclear envelope. The 55-60 MDa NPC is composed of at least 28 different subunits: AMO1, ELYS, GLE1, GLE2, MLP1, NDC1, NIC96, NSP1, NUP133, NUP145, NUP152, NUP159, NUP170, NUP188, NUP192, NUP37, NUP49, NUP53, NUP56, NUP57, NUP82, NUP84, NUP85, POM152, POM33, POM34, SEC13 and SEH1. Due to its 8-fold rotational symmetry, all subunits are present with 8 copies or multiples thereof.

The protein localises to the nucleus. Involved in the structural and functional organization of perinuclear chromatin. Associates with the nuclear pore complex and form filamentous structures along the nuclear periphery. This is Protein MLP1 homolog (MLP1) from Chaetomium thermophilum (strain DSM 1495 / CBS 144.50 / IMI 039719) (Thermochaetoides thermophila).